A 66-amino-acid polypeptide reads, in one-letter code: Stress-associated endoplasmic reticulum protein 1 (66 aa).

A disordered region spans residues 1 to 33 (MVAKQRIRMANEKHSKNITQRGNVAKTSRNAPG). The Cytoplasmic segment spans residues 1–38 (MVAKQRIRMANEKHSKNITQRGNVAKTSRNAPGEKASV). A compositionally biased stretch (polar residues) spans 17–30 (NITQRGNVAKTSRN). The chain crosses the membrane as a helical span at residues 39–59 (GPWLLALFIFVVCGSAIFQII). The Extracellular segment spans residues 60 to 66 (QSIRMGM).

This sequence belongs to the RAMP4 family. In terms of assembly, interacts with SEC61B, SEC61A1 and the SEC61 complex. Interacts with CANX.

It localises to the membrane. It is found in the endoplasmic reticulum membrane. In terms of biological role, interacts with target proteins during their translocation into the lumen of the endoplasmic reticulum. Protects unfolded target proteins against degradation during ER stress. May facilitate glycosylation of target proteins after termination of ER stress. May modulate the use of N-glycosylation sites on target proteins. The protein is Stress-associated endoplasmic reticulum protein 1 (SERP1) of Pongo abelii (Sumatran orangutan).